Consider the following 122-residue polypeptide: MARLAGVDLPREKRMEVALTYIFGIGPARSKELLEKTGISPDLRSKDLTDEQLSALRDVIENTWKVEGDLRREIQADIRRKIEIGSYQGLRHRRGLPVRGQRTKTNARTRKGPKKTIAGKKK.

The interval arginine 93–lysine 122 is disordered.

It belongs to the universal ribosomal protein uS13 family. In terms of assembly, part of the 30S ribosomal subunit. Forms a loose heterodimer with protein S19. Forms two bridges to the 50S subunit in the 70S ribosome.

In terms of biological role, located at the top of the head of the 30S subunit, it contacts several helices of the 16S rRNA. In the 70S ribosome it contacts the 23S rRNA (bridge B1a) and protein L5 of the 50S subunit (bridge B1b), connecting the 2 subunits; these bridges are implicated in subunit movement. Contacts the tRNAs in the A and P-sites. This Corynebacterium jeikeium (strain K411) protein is Small ribosomal subunit protein uS13.